The sequence spans 191 residues: Putative zinc metalloprotease MJ0611 (191 aa).

Residues 20–40 form a helical membrane-spanning segment; the sequence is AIAFIFSYPNFSILVFIISLI. His-49 serves as a coordination point for Zn(2+). Glu-50 is a catalytic residue. A Zn(2+)-binding site is contributed by His-53. 4 consecutive transmembrane segments (helical) span residues 73-93, 110-130, 133-153, and 171-191; these read LILG…PGAV, LAGP…MLIF, GSLL…LAGF, and PFIW…MMFW.

It belongs to the peptidase M50B family. It depends on Zn(2+) as a cofactor.

The protein localises to the cell membrane. This chain is Putative zinc metalloprotease MJ0611, found in Methanocaldococcus jannaschii (strain ATCC 43067 / DSM 2661 / JAL-1 / JCM 10045 / NBRC 100440) (Methanococcus jannaschii).